The following is a 143-amino-acid chain: Hemoglobin subunit alpha-1 (143 aa).

Residue serine 2 is modified to N-acetylserine. Positions 2-143 constitute a Globin domain; sequence SLSAKDKATV…LALALCEKYR (142 aa). Histidine 60 contacts O2. Histidine 89 contacts heme b.

This sequence belongs to the globin family. In terms of assembly, hb 1 is a heterotetramer of two alpha-1 and two beta-1 chains. Red blood cells.

In terms of biological role, involved in oxygen transport from gills to the various peripheral tissues. The chain is Hemoglobin subunit alpha-1 (hba1) from Boreogadus saida (Polar cod).